The primary structure comprises 711 residues: Arginine decarboxylase 2 (711 aa).

Residue K147 is modified to N6-(pyridoxal phosphate)lysine. Substrate is bound at residue 331-341 (IDIGGGLGIDY). Residues 642–661 (MHTKGGSEGENEEEEEDDEF) are disordered. The segment covering 650-661 (GENEEEEEDDEF) has biased composition (acidic residues).

Belongs to the Orn/Lys/Arg decarboxylase class-II family. SpeA subfamily. In terms of assembly, homodimer and heterodimer with ADC1. Pyridoxal 5'-phosphate serves as cofactor. The cofactor is Mg(2+).

Its subcellular location is the plastid. It is found in the chloroplast. The protein resides in the cytoplasm. The protein localises to the cytosol. The catalysed reaction is L-arginine + H(+) = agmatine + CO2. The protein operates within amine and polyamine biosynthesis; agmatine biosynthesis; agmatine from L-arginine: step 1/1. Functionally, required for the biosynthesis of putrescine. Catalyzes the first step of polyamine (PA) biosynthesis to produce putrescine from arginine. Is a major contributor to basal arginine decarboxylase (ADC) activity and putrescine biosynthesis. Accumulation of putrescine plays a positive role in salt stress tolerance. Accumulation of putrescine plays a positive role in freezing tolerance. Production of PA is essential for normal seed development. Controls PA homeostasis which is crucial for normal plant growth and development. The protein is Arginine decarboxylase 2 of Arabidopsis thaliana (Mouse-ear cress).